The following is a 458-amino-acid chain: Bifunctional protein GlmU (458 aa).

Positions 1-229 (MNKFAIVLAA…FDESLGVNDR (229 aa)) are pyrophosphorylase. Residues 8–11 (LAAG), K22, Q72, and 77–78 (GT) each bind UDP-N-acetyl-alpha-D-glucosamine. D102 contacts Mg(2+). The UDP-N-acetyl-alpha-D-glucosamine site is built by G139, E154, N169, and N227. Position 227 (N227) interacts with Mg(2+). Residues 230 to 250 (VALSQAELTMRKRINHQHMVN) are linker. Positions 251-458 (GVTLIDPATT…AKKMPHYRGQ (208 aa)) are N-acetyltransferase. Positions 332 and 350 each coordinate UDP-N-acetyl-alpha-D-glucosamine. The Proton acceptor role is filled by H362. UDP-N-acetyl-alpha-D-glucosamine is bound by residues Y365 and N376. Acetyl-CoA contacts are provided by A379, S404, A422, and R439.

It in the N-terminal section; belongs to the N-acetylglucosamine-1-phosphate uridyltransferase family. This sequence in the C-terminal section; belongs to the transferase hexapeptide repeat family. In terms of assembly, homotrimer. Mg(2+) is required as a cofactor.

The protein localises to the cytoplasm. It carries out the reaction alpha-D-glucosamine 1-phosphate + acetyl-CoA = N-acetyl-alpha-D-glucosamine 1-phosphate + CoA + H(+). The enzyme catalyses N-acetyl-alpha-D-glucosamine 1-phosphate + UTP + H(+) = UDP-N-acetyl-alpha-D-glucosamine + diphosphate. It participates in nucleotide-sugar biosynthesis; UDP-N-acetyl-alpha-D-glucosamine biosynthesis; N-acetyl-alpha-D-glucosamine 1-phosphate from alpha-D-glucosamine 6-phosphate (route II): step 2/2. The protein operates within nucleotide-sugar biosynthesis; UDP-N-acetyl-alpha-D-glucosamine biosynthesis; UDP-N-acetyl-alpha-D-glucosamine from N-acetyl-alpha-D-glucosamine 1-phosphate: step 1/1. Its pathway is bacterial outer membrane biogenesis; LPS lipid A biosynthesis. In terms of biological role, catalyzes the last two sequential reactions in the de novo biosynthetic pathway for UDP-N-acetylglucosamine (UDP-GlcNAc). The C-terminal domain catalyzes the transfer of acetyl group from acetyl coenzyme A to glucosamine-1-phosphate (GlcN-1-P) to produce N-acetylglucosamine-1-phosphate (GlcNAc-1-P), which is converted into UDP-GlcNAc by the transfer of uridine 5-monophosphate (from uridine 5-triphosphate), a reaction catalyzed by the N-terminal domain. The protein is Bifunctional protein GlmU of Lactococcus lactis subsp. lactis (strain IL1403) (Streptococcus lactis).